The sequence spans 468 residues: Abscisic acid 8'-hydroxylase 4 (468 aa).

The helical transmembrane segment at 4–24 (IWFLVVPILILCLLLVRVIVS) threads the bilayer. Cys415 is a heme binding site.

The protein belongs to the cytochrome P450 family. Heme serves as cofactor. As to expression, mainly expressed in flowers. Lower expression in siliques, rosette leaves, roots and stems. Not expressed in dry seeds. Expressed in silique envelopes, but not in embryo or endosperm during the seed development.

It is found in the membrane. The enzyme catalyses 2-cis-(+)-abscisate + reduced [NADPH--hemoprotein reductase] + O2 = (+)-8'-hydroxyabscisate + oxidized [NADPH--hemoprotein reductase] + H2O + H(+). The protein operates within plant hormone degradation; abscisic acid degradation. Its function is as follows. Involved in the oxidative degradation of abscisic acid, but not in the isomerization of the produced 8'-hydroxyabscisic acid (8'-OH-ABA) to (-)-phaseic acid (PA). This chain is Abscisic acid 8'-hydroxylase 4 (CYP707A4), found in Arabidopsis thaliana (Mouse-ear cress).